Consider the following 416-residue polypeptide: Tyrosine--tRNA ligase (416 aa).

An L-tyrosine-binding site is contributed by tyrosine 40. A 'HIGH' region motif is present at residues 45–54 (ATAASLHVGH). The L-tyrosine site is built by tyrosine 177 and glutamine 181. The 'KMSKS' region motif lies at 237–241 (KMGKS). Residue lysine 240 coordinates ATP. The region spanning 351–416 (LSVTHFLVAA…RKKHKLVRLA (66 aa)) is the S4 RNA-binding domain.

Belongs to the class-I aminoacyl-tRNA synthetase family. TyrS type 1 subfamily. As to quaternary structure, homodimer.

Its subcellular location is the cytoplasm. It carries out the reaction tRNA(Tyr) + L-tyrosine + ATP = L-tyrosyl-tRNA(Tyr) + AMP + diphosphate + H(+). Functionally, catalyzes the attachment of tyrosine to tRNA(Tyr) in a two-step reaction: tyrosine is first activated by ATP to form Tyr-AMP and then transferred to the acceptor end of tRNA(Tyr). The chain is Tyrosine--tRNA ligase from Cereibacter sphaeroides (strain ATCC 17025 / ATH 2.4.3) (Rhodobacter sphaeroides).